Consider the following 559-residue polypeptide: Small ribosomal subunit protein bS1 (559 aa).

S1 motif domains follow at residues Gly21 to Glu87, Ser105 to Arg171, Gly192 to Lys260, Gly277 to Lys347, Gly364 to Lys434, and Gly451 to His520.

This sequence belongs to the bacterial ribosomal protein bS1 family.

Binds mRNA; thus facilitating recognition of the initiation point. It is needed to translate mRNA with a short Shine-Dalgarno (SD) purine-rich sequence. The chain is Small ribosomal subunit protein bS1 (rpsA) from Buchnera aphidicola subsp. Schizaphis graminum (strain Sg).